A 138-amino-acid polypeptide reads, in one-letter code: Cyclin-dependent kinase 4 inhibitor B (138 aa).

The stretch at 13 to 39 (GSDEGLASAAARGLVEKVRQLLEAGAD) is one ANK 1; truncated repeat. 3 ANK repeats span residues 46–74 (FGRR…EPNC), 79–108 (TLTR…RLDV), and 112–138 (WGRL…ATGD).

It belongs to the CDKN2 cyclin-dependent kinase inhibitor family. In terms of assembly, heterodimer of CDKN2B with CDK4 or CDK6. Isoform 2 does not interact with CDK4 nor CDK6. Isoform 2 is expressed in normal (keratinocytes, fibroblasts) and tumor cell lines.

The protein localises to the cytoplasm. Its function is as follows. Interacts strongly with CDK4 and CDK6. Potent inhibitor. Potential effector of TGF-beta induced cell cycle arrest. The sequence is that of Cyclin-dependent kinase 4 inhibitor B (CDKN2B) from Homo sapiens (Human).